The following is a 399-amino-acid chain: F-box protein At1g10110 (399 aa).

The F-box domain occupies 9–56 (PNWSELVTDILSLVFKHLSFTDFARAKTVCSSWYFASKSSSPRKNHTP).

This chain is F-box protein At1g10110, found in Arabidopsis thaliana (Mouse-ear cress).